The chain runs to 439 residues: Serine/threonine-protein kinase 2 (439 aa).

The Protein kinase domain maps to 87–439; it reads NDDFYHISTG…IFSDWINGRN (353 aa). ATP contacts are provided by residues 93–101 and lysine 117; that span reads ISTGGYGIV. Catalysis depends on aspartate 307, which acts as the Proton acceptor.

Belongs to the protein kinase superfamily. Ser/Thr protein kinase family. Phosphorylated in vivo. Autophosphorylated in vitro.

It localises to the host endoplasmic reticulum. Its subcellular location is the host endoplasmic reticulum-Golgi intermediate compartment. The catalysed reaction is L-seryl-[protein] + ATP = O-phospho-L-seryl-[protein] + ADP + H(+). The enzyme catalyses L-threonyl-[protein] + ATP = O-phospho-L-threonyl-[protein] + ADP + H(+). In terms of biological role, essential serine-protein kinase involved in the early stage of virion morphogenesis. This chain is Serine/threonine-protein kinase 2 (OPG054), found in Monkeypox virus.